Reading from the N-terminus, the 320-residue chain is Lipoyl synthase (320 aa).

The segment at 9–31 (ANDARPRHPEKAHRPDQPIQRKP) is disordered. Basic and acidic residues predominate over residues 12–31 (ARPRHPEKAHRPDQPIQRKP). [4Fe-4S] cluster contacts are provided by Cys60, Cys65, Cys71, Cys86, Cys90, Cys93, and Ser299. A Radical SAM core domain is found at 72-288 (WEKKHATFMI…ETTAYAKGFL (217 aa)).

Belongs to the radical SAM superfamily. Lipoyl synthase family. Requires [4Fe-4S] cluster as cofactor.

It localises to the cytoplasm. The enzyme catalyses [[Fe-S] cluster scaffold protein carrying a second [4Fe-4S](2+) cluster] + N(6)-octanoyl-L-lysyl-[protein] + 2 oxidized [2Fe-2S]-[ferredoxin] + 2 S-adenosyl-L-methionine + 4 H(+) = [[Fe-S] cluster scaffold protein] + N(6)-[(R)-dihydrolipoyl]-L-lysyl-[protein] + 4 Fe(3+) + 2 hydrogen sulfide + 2 5'-deoxyadenosine + 2 L-methionine + 2 reduced [2Fe-2S]-[ferredoxin]. It functions in the pathway protein modification; protein lipoylation via endogenous pathway; protein N(6)-(lipoyl)lysine from octanoyl-[acyl-carrier-protein]: step 2/2. Its function is as follows. Catalyzes the radical-mediated insertion of two sulfur atoms into the C-6 and C-8 positions of the octanoyl moiety bound to the lipoyl domains of lipoate-dependent enzymes, thereby converting the octanoylated domains into lipoylated derivatives. This Methylobacterium nodulans (strain LMG 21967 / CNCM I-2342 / ORS 2060) protein is Lipoyl synthase.